The chain runs to 138 residues: Acidic phospholipase A2 VP7 (138 aa).

Residues 1 to 16 form the signal peptide; it reads MRTLWIVAVCLMGVEG. Intrachain disulfides connect C42-C131, C44-C60, C59-C111, C65-C138, C66-C104, C73-C97, and C91-C102. Ca(2+)-binding residues include Y43, G45, and G47. Residue H63 is part of the active site. A Ca(2+)-binding site is contributed by D64. D105 is an active-site residue.

Belongs to the phospholipase A2 family. Group II subfamily. D49 sub-subfamily. As to quaternary structure, does not form a complex. Requires Ca(2+) as cofactor. In terms of tissue distribution, expressed by the venom gland.

Its subcellular location is the secreted. It carries out the reaction a 1,2-diacyl-sn-glycero-3-phosphocholine + H2O = a 1-acyl-sn-glycero-3-phosphocholine + a fatty acid + H(+). Its function is as follows. Snake venom phospholipase A2 (PLA2) that is not toxic by itself, but the synergistical mixture of a basic and this acidic protein is lethal. PLA2 catalyzes the calcium-dependent hydrolysis of the 2-acyl groups in 3-sn-phosphoglycerides. This Daboia palaestinae (Palestine viper) protein is Acidic phospholipase A2 VP7.